A 331-amino-acid polypeptide reads, in one-letter code: L-lactate dehydrogenase A chain (331 aa).

Residues 29-57 and R98 contribute to the NAD(+) site; that span reads GMVG…MEDK. Residues R105, N137, and R168 each coordinate substrate. N137 is a binding site for NAD(+). H192 functions as the Proton acceptor in the catalytic mechanism. T247 serves as a coordination point for substrate.

Belongs to the LDH/MDH superfamily. LDH family. Homotetramer.

Its subcellular location is the cytoplasm. It catalyses the reaction (S)-lactate + NAD(+) = pyruvate + NADH + H(+). The protein operates within fermentation; pyruvate fermentation to lactate; (S)-lactate from pyruvate: step 1/1. In terms of biological role, interconverts simultaneously and stereospecifically pyruvate and lactate with concomitant interconversion of NADH and NAD(+). This is L-lactate dehydrogenase A chain (ldha) from Paranotothenia magellanica (Maori cod).